The following is a 546-amino-acid chain: Probable protein kinase UbiB (546 aa).

One can recognise a Protein kinase domain in the interval Asp-124–Leu-502. ATP is bound by residues Leu-130–Val-138 and Lys-153. Asp-288 functions as the Proton acceptor in the catalytic mechanism. Transmembrane regions (helical) follow at residues Tyr-501–Pro-521 and Glu-522–Trp-542.

Belongs to the ABC1 family. UbiB subfamily.

The protein resides in the cell inner membrane. It participates in cofactor biosynthesis; ubiquinone biosynthesis [regulation]. In terms of biological role, is probably a protein kinase regulator of UbiI activity which is involved in aerobic coenzyme Q (ubiquinone) biosynthesis. In Klebsiella pneumoniae (strain 342), this protein is Probable protein kinase UbiB.